Here is a 64-residue protein sequence, read N- to C-terminus: Large ribosomal subunit protein uL29 (64 aa).

It belongs to the universal ribosomal protein uL29 family.

The sequence is that of Large ribosomal subunit protein uL29 from Thiobacillus denitrificans (strain ATCC 25259 / T1).